We begin with the raw amino-acid sequence, 446 residues long: WD repeat domain phosphoinositide-interacting protein 1 (446 aa).

WD repeat units follow at residues 3-42, 47-88, 92-126, 131-173, 177-216, 222-261, and 304-343; these read AEAA…LFSL, QLDQ…VYHF, TEIC…IHNI, LLKT…LYDG, KTVC…VFSV, LYEF…IFKL, and FATA…MYNL. The Nuclear receptor interaction signature appears at 131-136; that stretch reads LLKTLL. Residues 225 to 228 carry the L/FRRG motif motif; sequence FRRG. Residues 386 to 406 form a disordered region; it reads ARPSASSASTVPGYSEDGGAL.

Belongs to the WD repeat PROPPIN family. In terms of assembly, interacts with androgen receptor (AR) and the estrogen receptors ESR1 and ESR2. Interacts with WIPI2. Interacts with WDR45. Interacts with ATG16L1. May interact with NUDC. Ubiquitously expressed. Highly expressed in skeletal muscle, heart, testis, pancreas and placenta. Highly expressed in G361, Sk-mel-28, Sk-mel-13, WM852 and WM451 cells. Up-regulated in a variety of tumor tissues.

It localises to the golgi apparatus. It is found in the trans-Golgi network. The protein resides in the endosome. Its subcellular location is the cytoplasmic vesicle. The protein localises to the clathrin-coated vesicle. It localises to the preautophagosomal structure membrane. It is found in the cytoplasm. The protein resides in the cytoskeleton. Component of the autophagy machinery that controls the major intracellular degradation process by which cytoplasmic materials are packaged into autophagosomes and delivered to lysosomes for degradation. Plays an important role in starvation- and calcium-mediated autophagy, as well as in mitophagy. Functions downstream of the ULK1 and PI3-kinases that produce phosphatidylinositol 3-phosphate (PtdIns3P) on membranes of the endoplasmic reticulum once activated. Binds phosphatidylinositol 3-phosphate (PtdIns3P), and maybe other phosphoinositides including PtdIns3,5P2 and PtdIns5P, and is recruited to phagophore assembly sites at the endoplasmic reticulum membranes. There, it assists WIPI2 in the recruitment of ATG12-ATG5-ATG16L1, a complex that directly controls the elongation of the nascent autophagosomal membrane. Together with WDR45/WIPI4, promotes ATG2 (ATG2A or ATG2B)-mediated lipid transfer by enhancing ATG2-association with phosphatidylinositol 3-monophosphate (PI3P)-containing membranes. Involved in xenophagy of Staphylococcus aureus. Invading S.aureus cells become entrapped in autophagosome-like WIPI1 positive vesicles targeted for lysosomal degradation. Also plays a distinct role in controlling the transcription of melanogenic enzymes and melanosome maturation, a process that is distinct from starvation-induced autophagy. May also regulate the trafficking of proteins involved in the mannose-6-phosphate receptor (MPR) recycling pathway. The chain is WD repeat domain phosphoinositide-interacting protein 1 (WIPI1) from Homo sapiens (Human).